We begin with the raw amino-acid sequence, 234 residues long: Ubiquitin carboxyl-terminal hydrolase 3 (234 aa).

The region spanning 12–232 (RWLPLESNPD…LNFNLIAISK (221 aa)) is the UCH catalytic domain. Cys101 functions as the Nucleophile in the catalytic mechanism. The active-site Proton donor is His172.

It belongs to the peptidase C12 family.

The catalysed reaction is Thiol-dependent hydrolysis of ester, thioester, amide, peptide and isopeptide bonds formed by the C-terminal Gly of ubiquitin (a 76-residue protein attached to proteins as an intracellular targeting signal).. In Arabidopsis thaliana (Mouse-ear cress), this protein is Ubiquitin carboxyl-terminal hydrolase 3.